The following is a 465-amino-acid chain: WASH complex subunit 1 (465 aa).

The tract at residues 1-54 is required for WASH complex assembly; the sequence is MTPVRMQHSLAGQTYAVPFIQPDLRREEAVQQMADALQYLQKVSGDIFSRISQQ. The WHD1 stretch occupies residues 1–167; that stretch reads MTPVRMQHSL…EGLGGLPSNI (167 aa). Lys-220 is covalently cross-linked (Glycyl lysine isopeptide (Lys-Gly) (interchain with G-Cter in ubiquitin)). Disordered stretches follow at residues 297–359, 376–407, and 423–465; these read QDGV…VDPS, GKAK…QGGH, and ISGK…DWES. The segment covering 302–314 has biased composition (pro residues); sequence TPPPPPPPPPPAP. The VCA stretch occupies residues 349–465; sequence QGAPREVVDP…AEEDEDDWES (117 aa). In terms of domain architecture, WH2 spans 361–383; that stretch reads GWATLLESIRQAGGIGKAKLRSM. The segment covering 382-398 has biased composition (basic and acidic residues); sequence SMKERKLEKQQQKEQEQ. Over residues 424–436 the composition is skewed to gly residues; it reads SGKGPGAGEGPGG. Acidic residues predominate over residues 456–465; sequence AEEDEDDWES.

Belongs to the WASH1 family. As to quaternary structure, component of the WASH core complex also described as WASH regulatory complex (SHRC) composed of WASH (WASHC1, WASH2P or WASH3P), WASHC2 (WASHC2A or WASHC2C), WASHC3, WASHC4 and WASHC5. The WASH core complex associates via WASHC2 with the F-actin-capping protein dimer (formed by CAPZA1, CAPZA2 or CAPZA3 and CAPZB) in a transient or substoichiometric manner which was initially described as WASH complex. Interacts (via WHD1 region) with WASHC2C; the interaction is direct. Interacts with VPS35; mediates the association with the retromer CSC complex. Interacts with FKBP15. Interacts with alpha-tubulin. Interacts with BECN1; this interaction can be competed out by AMBRA1 binding. Interacts with BLOC1S2; may associate with the BLOC-1 complex. Interacts with tubulin gamma chain (TUBG1 or TUBG2). Interacts with EXOC1, EXOC4, EXOC8; in MMP14-positive endosomes in breast tumor cells; indicative for an association with the exocyst complex. Interacts with TBC1D23. Post-translationally, ubiquitinated at Lys-220 via 'Lys-63'-linked ubiquitin chains by the TRIM27:MAGEL2 E3 ubiquitin ligase complex, leading to promote endosomal F-actin assembly.

The protein resides in the early endosome membrane. Its subcellular location is the recycling endosome membrane. It localises to the late endosome. It is found in the cytoplasmic vesicle. The protein localises to the autophagosome. The protein resides in the cytoplasm. Its subcellular location is the cytoskeleton. It localises to the microtubule organizing center. It is found in the centrosome. The protein localises to the centriole. Its function is as follows. Acts as a component of the WASH core complex that functions as a nucleation-promoting factor (NPF) at the surface of endosomes, where it recruits and activates the Arp2/3 complex to induce actin polymerization, playing a key role in the fission of tubules that serve as transport intermediates during endosome sorting. Involved in endocytic trafficking of EGF. Involved in transferrin receptor recycling. Regulates the trafficking of endosomal alpha5beta1 integrin to the plasma membrane and involved in invasive cell migration. In T-cells involved in endosome-to-membrane recycling of receptors including T-cell receptor (TCR), CD28 and ITGAL; proposed to be implicated in T cell proliferation and effector function. In dendritic cells involved in endosome-to-membrane recycling of major histocompatibility complex (MHC) class II probably involving retromer and subsequently allowing antigen sampling, loading and presentation during T-cell activation. Involved in Arp2/3 complex-dependent actin assembly driving Salmonella typhimurium invasion independent of ruffling. Involved in the exocytosis of MMP14 leading to matrix remodeling during invasive migration and implicating late endosome-to-plasma membrane tubular connections and cooperation with the exocyst complex. Involved in negative regulation of autophagy independently from its role in endosomal sorting by inhibiting BECN1 ubiquitination to inactivate PIK3C3/Vps34 activity. The polypeptide is WASH complex subunit 1 (Homo sapiens (Human)).